The following is a 191-amino-acid chain: Fe/S biogenesis protein NfuA (191 aa).

Residues Cys149 and Cys152 each coordinate [4Fe-4S] cluster.

The protein belongs to the NfuA family. In terms of assembly, homodimer. [4Fe-4S] cluster serves as cofactor.

Functionally, involved in iron-sulfur cluster biogenesis. Binds a 4Fe-4S cluster, can transfer this cluster to apoproteins, and thereby intervenes in the maturation of Fe/S proteins. Could also act as a scaffold/chaperone for damaged Fe/S proteins. The sequence is that of Fe/S biogenesis protein NfuA from Salmonella choleraesuis (strain SC-B67).